A 307-amino-acid chain; its full sequence is Elongation factor Ts (307 aa).

The involved in Mg(2+) ion dislocation from EF-Tu stretch occupies residues 79–82 (TDFV).

The protein belongs to the EF-Ts family.

The protein localises to the cytoplasm. Associates with the EF-Tu.GDP complex and induces the exchange of GDP to GTP. It remains bound to the aminoacyl-tRNA.EF-Tu.GTP complex up to the GTP hydrolysis stage on the ribosome. In Bartonella tribocorum (strain CIP 105476 / IBS 506), this protein is Elongation factor Ts.